Reading from the N-terminus, the 80-residue chain is Small ribosomal subunit protein bS16 (80 aa).

It belongs to the bacterial ribosomal protein bS16 family.

This Acholeplasma laidlawii (strain PG-8A) protein is Small ribosomal subunit protein bS16.